Consider the following 1071-residue polypeptide: Nonribosomal peptide synthetase flvI (1071 aa).

An adenylation region spans residues 33-417 (RRVLEQHDAP…GSLHFISRKD (385 aa)). In terms of domain architecture, Carrier spans 552–628 (MPLTEIELKM…MLCQNIKTDV (77 aa)). Ser589 is subject to O-(pantetheine 4'-phosphoryl)serine. The segment at 689 to 961 (NYTLRLEFKL…IDDRDIEQLS (273 aa)) is condensation.

It belongs to the NRP synthetase family.

It catalyses the reaction (2S)-5,5-dimethylpiperidine-2-carboxylate + 10-hydroxy-pre-flavunoidine + ATP = flavunoidine + AMP + diphosphate + H(+). The protein operates within secondary metabolite biosynthesis; terpenoid biosynthesis. Functionally, nonribosomal peptide synthetase; part of the gene cluster that mediates the biosynthesis of flavunoidine, an alkaloidal terpenoid with a tetracyclic cage-like core connected to dimethylcadaverine via a C-N bond and acylated with 5,5-dimethyl-L-pipecolate. The tetracyclic core is synthesized by the terpene cyclase flvE and the cytochrome P450 monooxygenase flvD. The terpene cyclase flvE catalyzes the cyclization of farnesyl pyrophosphate (FPP) to form (1R,4R,5S)-(+)-acoradiene and the cytochrome P450 monooxygenase flvD is then responsible for oxidative conversion of (1R,4R,5S)-(+)-acoradiene into the tetracyclic cage present in the final product flavunoidine. In parallel, the N-methyltransferase flvH dimethylates L-lysine to give N,N-dimethyl-L-Lysin which is decarboxylated by flvG to afford dimethylcadaverine. The terpene cyclase-like protein flvF is the enzyme that attaches the dimethylcadaverine precusor at the C-7 of the tetracyclic cage to yield pre-flavunoidine. The cytochrome monooxygenase flvC hydroxylates the C-10 position of pre-flavunoidine whereas the NRPS flvI acylates the terpenoid core at the hydroxylated C-10 with dimethylpipecolate to yield final flavunoidine. The bifunctional enzyme flvA and the dehydrogenase flvB are responsible for the synthesis of the dimethylpipecolate precursor. The PLP-dependent lyase domain of flvA might use L-O-acetyl-homoserine and alpha-keto-isovalerate to form an intermediary ketone that can cyclize intramolecularly to yield an imine. The imine can be reduced by flvB to yield the 6-carboxylated pipecolate. The C-terminal alpha-KG-dependent oxygenase domain of flvA is then proposed to catalyze the decarboxylation to yield dimethylpipecolate. In Aspergillus flavus (strain ATCC 200026 / FGSC A1120 / IAM 13836 / NRRL 3357 / JCM 12722 / SRRC 167), this protein is Nonribosomal peptide synthetase flvI.